A 234-amino-acid chain; its full sequence is Large ribosomal subunit protein uL1 (234 aa).

It belongs to the universal ribosomal protein uL1 family. In terms of assembly, part of the 50S ribosomal subunit.

In terms of biological role, binds directly to 23S rRNA. The L1 stalk is quite mobile in the ribosome, and is involved in E site tRNA release. Functionally, protein L1 is also a translational repressor protein, it controls the translation of the L11 operon by binding to its mRNA. This is Large ribosomal subunit protein uL1 from Serratia proteamaculans (strain 568).